Here is a 184-residue protein sequence, read N- to C-terminus: Photosystem I assembly protein Ycf4 (184 aa).

Helical transmembrane passes span 22–42 (FFWAFILFLGSLGFLLVGTSS) and 57–77 (IIFFPQGIVMSFYGIAGLFIS).

The protein belongs to the Ycf4 family.

The protein resides in the plastid. It is found in the chloroplast thylakoid membrane. In terms of biological role, seems to be required for the assembly of the photosystem I complex. The sequence is that of Photosystem I assembly protein Ycf4 from Aethionema grandiflorum (Persian stone-cress).